Here is a 189-residue protein sequence, read N- to C-terminus: MRKIGIIGGTFDPPHNGHLLIANEVYHALGLEEVWFLPNQVPPHKQGRNITSVKSRLNMLQIAIEEEAYFSICLEELDREGPSYTYDTMVQLTEKYPDVQFHFIIGGDMVEYLPKWYNIEKLLKLVTFVGVARPGYTLHTPYDIVKVEIPEFAVSSSLLRERYMTKKTCKYLLPEKVQVYIERNGLYES.

It belongs to the NadD family.

The enzyme catalyses nicotinate beta-D-ribonucleotide + ATP + H(+) = deamido-NAD(+) + diphosphate. It functions in the pathway cofactor biosynthesis; NAD(+) biosynthesis; deamido-NAD(+) from nicotinate D-ribonucleotide: step 1/1. Catalyzes the reversible adenylation of nicotinate mononucleotide (NaMN) to nicotinic acid adenine dinucleotide (NaAD). The sequence is that of Probable nicotinate-nucleotide adenylyltransferase from Bacillus mycoides (strain KBAB4) (Bacillus weihenstephanensis).